Here is a 194-residue protein sequence, read N- to C-terminus: dCTP deaminase (194 aa).

DCTP contacts are provided by residues 110–115 (RSSLAR), D128, 136–138 (VLE), Y171, K178, and Q182. The Proton donor/acceptor role is filled by E138.

The protein belongs to the dCTP deaminase family. As to quaternary structure, homotrimer.

The enzyme catalyses dCTP + H2O + H(+) = dUTP + NH4(+). The protein operates within pyrimidine metabolism; dUMP biosynthesis; dUMP from dCTP (dUTP route): step 1/2. Catalyzes the deamination of dCTP to dUTP. In Mannheimia succiniciproducens (strain KCTC 0769BP / MBEL55E), this protein is dCTP deaminase.